A 354-amino-acid chain; its full sequence is Uroporphyrinogen decarboxylase (354 aa).

Residues 27–31 (RQAGR), Phe-46, Asp-77, Tyr-153, Thr-208, and His-326 contribute to the substrate site.

Belongs to the uroporphyrinogen decarboxylase family. Homodimer.

It is found in the cytoplasm. It carries out the reaction uroporphyrinogen III + 4 H(+) = coproporphyrinogen III + 4 CO2. The protein operates within porphyrin-containing compound metabolism; protoporphyrin-IX biosynthesis; coproporphyrinogen-III from 5-aminolevulinate: step 4/4. Functionally, catalyzes the decarboxylation of four acetate groups of uroporphyrinogen-III to yield coproporphyrinogen-III. This is Uroporphyrinogen decarboxylase from Neisseria meningitidis serogroup B (strain ATCC BAA-335 / MC58).